The chain runs to 415 residues: Mitogen-activated protein kinase mpkC (415 aa).

The Protein kinase domain maps to 20 to 299 (YANLQPVGLG…AEQGLMHPWM (280 aa)). ATP-binding positions include 26–34 (VGLGTAGVV) and Lys49. The active-site Proton acceptor is the Asp141. Position 171 is a phosphothreonine (Thr171). The short motif at 171 to 173 (TGY) is the TXY element. Position 173 is a phosphotyrosine (Tyr173).

This sequence belongs to the protein kinase superfamily. Ser/Thr protein kinase family. MAP kinase subfamily. HOG1 sub-subfamily. The cofactor is Mg(2+). Post-translationally, dually phosphorylated on Thr-171 and Tyr-173, which activates the enzyme.

The catalysed reaction is L-seryl-[protein] + ATP = O-phospho-L-seryl-[protein] + ADP + H(+). It carries out the reaction L-threonyl-[protein] + ATP = O-phospho-L-threonyl-[protein] + ADP + H(+). Its activity is regulated as follows. Activated by tyrosine and threonine phosphorylation. Mitogen-activated protein kinase required for growth on media where sorbitol or mannitol is the sole carbon source. The polypeptide is Mitogen-activated protein kinase mpkC (mpkC) (Emericella nidulans (strain FGSC A4 / ATCC 38163 / CBS 112.46 / NRRL 194 / M139) (Aspergillus nidulans)).